The sequence spans 191 residues: Calcium and integrin-binding protein 1 (191 aa).

The N-myristoyl glycine moiety is linked to residue G2. 2 EF-hand domains span residues 103-138 and 148-183; these read TPDI…LTGE and EMKQ…SPDF. 10 residues coordinate Ca(2+): D116, D118, D120, T122, D127, D161, D163, D165, T167, and E172.

Monomer. Interacts with the heterodimeric integrin alpha-IIb/beta3 (ITGA2B-ITGB3). Interacts with ITGA2B (via cytoplasmic domain); the interaction is direct and calcium-dependent. Interacts with the protein kinases PLK2/SNK and PRKDC (via the region immediately upstream of the kinase domain). Interacts with PLK3; the interaction inhibits PLK3 kinase activity. Interacts with PSEN2. Interacts (via C-terminus) with F8. Interacts with NBR1 (via C-terminus). Interacts with FEZ1 (via C-terminus). Interacts with UBR5 (via C-terminus); the interaction is sensitive to DNA damage, and may target CIB1 for ubiquitin-mediated degradation. Interacts with IFI6; the interaction is direct. Interacts with BCL2. Interacts with ITPR3; the interaction occurs in a calcium dependent manner. Interacts with PTK2/FAK1. Interacts with MAP3K5; the interaction inhibits MAP3K5 activation by phosphorylation, and its subsequent interaction with TRAF2. Interacts (via C-terminal region) with STMN2 (via the N-terminal region); the interaction is direct, occurs in a calcium-dependent manner and attenuates the STMN2-induced neurite outgrowth inhibition. Interacts with SPHK1, the interaction occurs in a calcium-dependent manner. Interacts with ITGA2B (via C-terminal cytoplasmic tail); the interaction occurs upon platelet aggregation and is stabilized/increased in a calcium and magnesium-dependent manner. Interacts with PAK1 (via N-terminal region); the interaction is direct and occurs in a calcium-dependent manner. Interacts with RAC3 (via C-terminal region); the interaction induces their association with the cytoskeleton upon alpha-IIb/beta3 integrin-mediated adhesion. Interacts with ITGA5 and ITGAV. Interacts with MYO1C. Interacts with ITGA2B (via C-terminal cytoplasmic tail region). Interacts (via C-terminal region) with PPP3R1; the interaction increases upon cardiomyocytes hypertrophy. Interacts with CACNA1C; the interaction increases upon cardiomyocytes hypertrophy. Interacts with TAS1R2 (via C-terminus); this interaction is independent of the myristoylation state of CIB1. Interacts and forms a complex with TMC6 and TMC8; the interaction stabilizes each component of the complex.

Its subcellular location is the membrane. The protein resides in the cell membrane. It is found in the sarcolemma. The protein localises to the apical cell membrane. It localises to the cell projection. Its subcellular location is the ruffle membrane. The protein resides in the filopodium tip. It is found in the growth cone. The protein localises to the lamellipodium. It localises to the cytoplasm. Its subcellular location is the cytoskeleton. The protein resides in the microtubule organizing center. It is found in the centrosome. The protein localises to the perinuclear region. It localises to the nucleus. Its subcellular location is the neuron projection. The protein resides in the perikaryon. In terms of biological role, calcium-binding protein that plays a role in the regulation of numerous cellular processes, such as cell differentiation, cell division, cell proliferation, cell migration, thrombosis, angiogenesis, cardiac hypertrophy and apoptosis. Involved in bone marrow megakaryocyte differentiation by negatively regulating thrombopoietin-mediated signaling pathway. Participates in the endomitotic cell cycle of megakaryocyte, a form of mitosis in which both karyokinesis and cytokinesis are interrupted. Plays a role in integrin signaling by negatively regulating alpha-IIb/beta3 activation in thrombin-stimulated megakaryocytes preventing platelet aggregation. Up-regulates PTK2/FAK1 activity, and is also needed for the recruitment of PTK2/FAK1 to focal adhesions; it thus appears to play an important role in focal adhesion formation. Positively regulates cell migration on fibronectin in a CDC42-dependent manner, the effect being negatively regulated by PAK1. Functions as a negative regulator of stress activated MAP kinase (MAPK) signaling pathways. Down-regulates inositol 1,4,5-trisphosphate receptor-dependent calcium signaling. Involved in sphingosine kinase SPHK1 translocation to the plasma membrane in a N-myristoylation-dependent manner preventing TNF-alpha-induced apoptosis. Regulates serine/threonine-protein kinase PLK3 activity for proper completion of cell division progression. Plays a role in microtubule (MT) dynamics during neuronal development; disrupts the MT depolymerization activity of STMN2 attenuating NGF-induced neurite outgrowth and the MT reorganization at the edge of lamellipodia. Promotes cardiomyocyte hypertrophy via activation of the calcineurin/NFAT signaling pathway. Stimulates calcineurin PPP3R1 activity by mediating its anchoring to the sarcolemma. In ischemia-induced (pathological or adaptive) angiogenesis, stimulates endothelial cell proliferation, migration and microvessel formation by activating the PAK1 and ERK1/ERK2 signaling pathway. Also promotes cancer cell survival and proliferation. May regulate cell cycle and differentiation of spermatogenic germ cells, and/or differentiation of supporting Sertoli cells. Forms a complex with TMC6/EVER1 and TMC8/EVER2 in lymphocytes and keratynocytes where CIB1 stabilizes TMC6 and TMC8 levels and reciprocally. The protein is Calcium and integrin-binding protein 1 (CIB1) of Bos taurus (Bovine).